The primary structure comprises 189 residues: UPF0398 protein BH1768 (189 aa).

This sequence belongs to the UPF0398 family.

In Halalkalibacterium halodurans (strain ATCC BAA-125 / DSM 18197 / FERM 7344 / JCM 9153 / C-125) (Bacillus halodurans), this protein is UPF0398 protein BH1768.